Consider the following 158-residue polypeptide: Secreted RxLR effector protein 131 (158 aa).

Residues 1 to 20 (MRQIPLVVVLLLAYAARLQG) form the signal peptide. The short motif at 39–57 (RDLDGSTTSMSVNVDDEER) is the RxLR-dEER element. The host BKI1-binding stretch occupies residues 120–158 (KGNVKYLAIIYVICILSVLGILGTVFAINRNISNQYIHE). Residues 127 to 147 (AIIYVICILSVLGILGTVFAI) traverse the membrane as a helical segment. N150 is a glycosylation site (N-linked (GlcNAc...) asparagine).

The protein belongs to the RxLR effector family. As to quaternary structure, interacts with host BKI1.

It is found in the secreted. The protein resides in the host cell membrane. Secreted effector that suppresses pathogen-associated molecular pattern (PAMP)-triggered immunity (PTI) in host plants. Suppresses both defense-related brassinosteroid (BR) and ERECTA (ER) signaling pathways in planta by interacting with host BRI1 kinase inhibitor 1 (BKI1) at the host plasma membrane, leading to a host dwarf phenotype. The sequence is that of Secreted RxLR effector protein 131 from Plasmopara viticola (Downy mildew of grapevine).